Consider the following 391-residue polypeptide: Histidinol-phosphate aminotransferase (391 aa).

Position 246 is an N6-(pyridoxal phosphate)lysine (Lys-246).

It belongs to the class-II pyridoxal-phosphate-dependent aminotransferase family. Histidinol-phosphate aminotransferase subfamily. Pyridoxal 5'-phosphate is required as a cofactor.

The catalysed reaction is L-histidinol phosphate + 2-oxoglutarate = 3-(imidazol-4-yl)-2-oxopropyl phosphate + L-glutamate. It participates in amino-acid biosynthesis; L-histidine biosynthesis; L-histidine from 5-phospho-alpha-D-ribose 1-diphosphate: step 7/9. The chain is Histidinol-phosphate aminotransferase from Methanopyrus kandleri (strain AV19 / DSM 6324 / JCM 9639 / NBRC 100938).